Consider the following 24-residue polypeptide: Outer membrane protein (24 aa).

The protein belongs to the Gram-negative porin family. In terms of assembly, homotrimer.

It localises to the cell outer membrane. In terms of biological role, forms pores that allow passive diffusion of small molecules across the outer membrane. This Sodalis glossinidius protein is Outer membrane protein.